The sequence spans 117 residues: Large ribosomal subunit protein bL20c (117 aa).

This sequence belongs to the bacterial ribosomal protein bL20 family.

It localises to the plastid. It is found in the chloroplast. Functionally, binds directly to 23S ribosomal RNA and is necessary for the in vitro assembly process of the 50S ribosomal subunit. It is not involved in the protein synthesizing functions of that subunit. The sequence is that of Large ribosomal subunit protein bL20c from Carica papaya (Papaya).